A 176-amino-acid chain; its full sequence is Thiol-disulfide oxidoreductase ResA (176 aa).

Residues 11-30 (LSILAVISVALGYTFYSNFF) traverse the membrane as a helical; Signal-anchor for type II membrane protein segment. Residues 36-176 (ARAGEQAVNF…EFMELIKPEA (141 aa)) enclose the Thioredoxin domain. Cysteines 74 and 77 form a disulfide.

The protein belongs to the thioredoxin family. ResA subfamily.

The protein resides in the cell membrane. The protein operates within protein modification; cytochrome c assembly. In terms of biological role, thiol-disulfide oxidoreductase which is required in disulfide reduction during c-type cytochrome synthesis. May accept reducing equivalents from CcdA, leading to breakage of disulfide bonds in apocytochrome c; following this reduction heme can be covalently attached. This is Thiol-disulfide oxidoreductase ResA from Halalkalibacterium halodurans (strain ATCC BAA-125 / DSM 18197 / FERM 7344 / JCM 9153 / C-125) (Bacillus halodurans).